The primary structure comprises 182 residues: Large ribosomal subunit protein uL16 (182 aa).

It belongs to the universal ribosomal protein uL16 family. As to quaternary structure, part of the 50S ribosomal subunit.

The polypeptide is Large ribosomal subunit protein uL16 (Thermococcus kodakarensis (strain ATCC BAA-918 / JCM 12380 / KOD1) (Pyrococcus kodakaraensis (strain KOD1))).